A 317-amino-acid chain; its full sequence is MTTALDQLKQYTTVVADTGDFQQLAQYQPQDATTNPSLILKAVQKDAYKPILEKTVRDHRNESTDFIIDRLLIAFGTEILKLIPGRVSTEVDARLSFDTPRSIDKGRELIKLYEAAGIGRERILIKLASTWEGIRAAEVLQKEGIKCNMTLLFSLVQAAACAEAGAQLISPFVGRIYDWYKKQAGAEWNEEKDGGANDPGVQSVRRIYTYYKTFGYNTEVMGASFRTTSQITELAGCDLLTISPDLLQKLQDSNDTVTRKLSPDALQDKPAARVAIDEAAFRFQLNDDAMATEKLAEGIRVFAADAVKLEKLIDSLR.

The active-site Schiff-base intermediate with substrate is Lys-126.

The protein belongs to the transaldolase family. Type 1 subfamily. Homodimer.

The protein resides in the cytoplasm. The catalysed reaction is D-sedoheptulose 7-phosphate + D-glyceraldehyde 3-phosphate = D-erythrose 4-phosphate + beta-D-fructose 6-phosphate. It participates in carbohydrate degradation; pentose phosphate pathway; D-glyceraldehyde 3-phosphate and beta-D-fructose 6-phosphate from D-ribose 5-phosphate and D-xylulose 5-phosphate (non-oxidative stage): step 2/3. Transaldolase is important for the balance of metabolites in the pentose-phosphate pathway. This Burkholderia lata (strain ATCC 17760 / DSM 23089 / LMG 22485 / NCIMB 9086 / R18194 / 383) protein is Transaldolase.